Reading from the N-terminus, the 476-residue chain is Major facilitator superfamily domain-containing protein 12 (476 aa).

Met-1 is subject to N-acetylmethionine. At 1–25 (MSPPSDDAGPGPPRTLSLAARLSFA) the chain is on the cytoplasmic side. Residues 26-46 (VGHFLNDLCAGMWFTYLLLFL) traverse the membrane as a helical segment. The Lumenal portion of the chain corresponds to 47 to 55 (HSVRGYSSR). A helical transmembrane segment spans residues 56–76 (GAGLLLLLGQVADGLCTPLVG). Residues 77-94 (YEADRASCVRCGPRKAWH) lie on the Cytoplasmic side of the membrane. Residues 95–115 (LAGTVCVLLSFPFIFSPCLGC) form a helical membrane-spanning segment. The Lumenal segment spans residues 116-121 (GEATPE). A helical membrane pass occupies residues 122-142 (WAALLYYGPFIVVFQFGWAAT). Topologically, residues 143–167 (QIAHLSLIPELVTSDHEKVELTALR) are cytoplasmic. Residues 168-188 (YAFTVVANITVYGAAWLLLHL) traverse the membrane as a helical segment. Topologically, residues 189–213 (QGSAHGEQDISVGDQLGVQDVPVFR) are lumenal. Residues 214 to 234 (NLALLVVGVGAIFSLLFHLGT) form a helical membrane-spanning segment. Over 235–284 (KEGHRSQHWGNEPNEHTPLVAPAAQPLLLWKHWLREPAFYQVGMLYMTTR) the chain is Cytoplasmic. Thr-251 bears the Phosphothreonine mark. Residues 285–305 (LIVNLSQTYIAMYLTYSLSLP) form a helical membrane-spanning segment. Residue Lys-306 is a topological domain, lumenal. A helical membrane pass occupies residues 307-327 (KFIATIPLVMYLSGFFSSFLM). Topologically, residues 328 to 343 (KPVNRRIGRNMTYFTG) are cytoplasmic. A run of 2 helical transmembrane segments spans residues 344–364 (LLVI…GVAV) and 365–385 (YGAA…SLAM). Over 386-398 (TADLIGPHTHSGA) the chain is Cytoplasmic. The chain crosses the membrane as a helical span at residues 399-419 (FVYGAMSFSDKVANGLAVMAV). The Lumenal portion of the chain corresponds to 420-444 (QSLHPCPSELCCGACISFYHWVMTA). The chain crosses the membrane as a helical span at residues 445–465 (VTGGVGVAAALALCSLLIWPI). Over 466–476 (RIRNRDPRDRP) the chain is Cytoplasmic.

This sequence belongs to the major facilitator superfamily. Phosphorylation at Thr-251 by MTOR via mTORC1 pathway promotes cysteine transport in lysosomes, thereby regulating lysosomal cysteine and cystine storage and redox homeostasis.

The protein localises to the melanosome membrane. The protein resides in the lysosome membrane. It carries out the reaction L-cysteine(in) = L-cysteine(out). Transporter that mediates the import of cysteine into melanosomes, thereby regulating skin/hair pigmentation. In melanosomes, cysteine import is required both for normal levels of cystine, the oxidized dimer of cysteine, and provide cysteine for the production of the cysteinyldopas used in pheomelanin synthesis, thereby regulating skin/hair pigmentation. Also catalyzes import of cysteine into lysosomes in non-pigmented cells, regulating lysosomal cystine and cysteine storage, which is essnetial for redox homeostasis. The protein is Major facilitator superfamily domain-containing protein 12 of Mus musculus (Mouse).